The following is a 278-amino-acid chain: Putative cysteine-rich repeat secretory protein 17 (278 aa).

The first 32 residues, 1 to 32 (MYSLSSVSKHLILVHILALVATQLLLIRSVSS), serve as a signal peptide directing secretion. Gnk2-homologous domains are found at residues 39–142 (YLNH…SIDN) and 148–265 (YGDS…LYPF).

It belongs to the cysteine-rich repeat secretory protein family.

The protein localises to the secreted. This is Putative cysteine-rich repeat secretory protein 17 (CRRSP17) from Arabidopsis thaliana (Mouse-ear cress).